The chain runs to 2177 residues: Mediator of RNA polymerase II transcription subunit 12 (2177 aa).

The segment at 12–35 is disordered; it reads RPLKRPRLGPPDVYPQDPKQKEDE. K80 is subject to N6-acetyllysine. Y166 is subject to Phosphotyrosine. 4 disordered regions span residues 323–344, 627–669, 690–717, and 1241–1266; these read QSTSTLPTTPAPQPPTSSTPST, GAPG…MDID, TMPCEGKGSPSPEKPDVEKEVKPPPKEK, and TVTGGTEELPEEEGGGGSGGRRQGGR. Phosphoserine is present on residues S635, S665, S698, and S700. A compositionally biased stretch (basic and acidic residues) spans 702 to 717; it reads EKPDVEKEVKPPPKEK. Residues S1258 and S1269 each carry the phosphoserine modification. Residues 1394–1411 are compositionally biased toward low complexity; that stretch reads AETGSSSGSTASNMPSSS. Disordered regions lie at residues 1394–1415, 1450–1474, and 1738–1829; these read AETGSSSGSTASNMPSSSKTKP, ELEKGQHLGSSSRKERDRQKQKSMS, and YLEP…PGSI. Composition is skewed to basic and acidic residues over residues 1450-1469 and 1758-1771; these read ELEKGQHLGSSSRKERDRQK and EPEKKAPEPPKTDK. The segment at 1616–2051 is interaction with CTNNB1 and GLI3; it reads LAKKLQKELG…VRSTAILPEQ (436 aa). Positions 1784 to 1793 are enriched in basic residues; sequence KKSTKGKKRS. K1798 is modified (N6-acetyllysine). Residue R1899 is modified to Asymmetric dimethylarginine; alternate. Omega-N-methylarginine; alternate is present on R1899. R1910 bears the Omega-N-methylarginine mark. Disordered regions lie at residues 1919 to 1938 and 1967 to 1989; these read QGMLGQSSVHQMTPSSSYGL and SYSSQPYQSTHPSTNPTLVDPTR. Residues 1927-1938 are compositionally biased toward polar residues; the sequence is VHQMTPSSSYGL. Residues 1967–1980 show a composition bias toward low complexity; the sequence is SYSSQPYQSTHPST. Asymmetric dimethylarginine occurs at positions 1994 and 2015. 3 stretches are compositionally biased toward low complexity: residues 2115–2125, 2133–2149, and 2158–2171; these read QHQQQQQQQAA, SQPQFQRQGLQQTQQQQ, and LQQQLSNTQPQPST. 2 disordered regions span residues 2115-2149 and 2158-2177; these read QHQQQQQQQAAPPQPQPQSQPQFQRQGLQQTQQQQ and LQQQLSNTQPQPSTNIFGRY.

It belongs to the Mediator complex subunit 12 family. Component of the Mediator complex, which is composed of MED1, MED4, MED6, MED7, MED8, MED9, MED10, MED11, MED12, MED13, MED13L, MED14, MED15, MED16, MED17, MED18, MED19, MED20, MED21, MED22, MED23, MED24, MED25, MED26, MED27, MED29, MED30, MED31, CCNC, CDK8 and CDC2L6/CDK11. The MED12, MED13, CCNC and CDK8 subunits form a distinct module termed the CDK8 module. Mediator containing the CDK8 module is less active than Mediator lacking this module in supporting transcriptional activation. Individual preparations of the Mediator complex lacking one or more distinct subunits have been variously termed ARC, CRSP, DRIP, PC2, SMCC and TRAP. Also interacts with CTNNB1 and GLI3. In terms of tissue distribution, ubiquitous.

The protein resides in the nucleus. In terms of biological role, component of the Mediator complex, a coactivator involved in the regulated transcription of nearly all RNA polymerase II-dependent genes. Mediator functions as a bridge to convey information from gene-specific regulatory proteins to the basal RNA polymerase II transcription machinery. Mediator is recruited to promoters by direct interactions with regulatory proteins and serves as a scaffold for the assembly of a functional pre-initiation complex with RNA polymerase II and the general transcription factors. This subunit may specifically regulate transcription of targets of the Wnt signaling pathway and SHH signaling pathway. The chain is Mediator of RNA polymerase II transcription subunit 12 (MED12) from Homo sapiens (Human).